Here is a 467-residue protein sequence, read N- to C-terminus: Geranylgeranyl diphosphate reductase, chloroplastic (467 aa).

The transit peptide at methionine 1–threonine 43 directs the protein to the chloroplast.

Belongs to the geranylgeranyl reductase family. ChlP subfamily. As to quaternary structure, part of the FLU-containing chloroplast membrane complex composed of FLU, CRD1, PORB, PORC, CHLP and HEMA1.

It localises to the plastid. It is found in the chloroplast membrane. The catalysed reaction is phytyl diphosphate + 3 NADP(+) = geranylgeranyl diphosphate + 3 NADPH + 3 H(+). It participates in porphyrin-containing compound metabolism; chlorophyll biosynthesis. It functions in the pathway cofactor biosynthesis; tocopherol biosynthesis. In terms of biological role, catalyzes the reduction of geranylgeranyl diphosphate to phytyl diphosphate, providing phytol for both tocopherol and chlorophyll synthesis. This chain is Geranylgeranyl diphosphate reductase, chloroplastic (CHLP), found in Arabidopsis thaliana (Mouse-ear cress).